Reading from the N-terminus, the 205-residue chain is Large ribosomal subunit protein uL18 (205 aa).

This sequence belongs to the universal ribosomal protein uL18 family. As to quaternary structure, part of the 50S ribosomal subunit. Contacts the 5S and 23S rRNAs.

Functionally, this is one of the proteins that bind and probably mediate the attachment of the 5S RNA into the large ribosomal subunit, where it forms part of the central protuberance. This Haloquadratum walsbyi (strain DSM 16790 / HBSQ001) protein is Large ribosomal subunit protein uL18.